Consider the following 333-residue polypeptide: Isopenicillin N synthase (333 aa).

3 residues coordinate isopenicillin N: R87, Y91, and Y191. The N-[(5S)-5-amino-5-carboxypentanoyl]-L-cysteinyl-D-valine site is built by R87, Y91, Y191, H216, and D218. Residues 180 to 290 (DTLSCRSLMI…RLSLPFFLHA (111 aa)) enclose the Fe2OG dioxygenase domain. H216, D218, and H272 together coordinate Fe(2+). 2-oxoglutarate is bound at residue R281. S283 contributes to the isopenicillin N binding site. S283 is an N-[(5S)-5-amino-5-carboxypentanoyl]-L-cysteinyl-D-valine binding site.

This sequence belongs to the iron/ascorbate-dependent oxidoreductase family. It depends on Fe cation as a cofactor. The cofactor is L-ascorbate.

It carries out the reaction N-[(5S)-5-amino-5-carboxypentanoyl]-L-cysteinyl-D-valine + O2 = isopenicillin N + 2 H2O. It participates in antibiotic biosynthesis; penicillin G biosynthesis; penicillin G from L-alpha-aminoadipate and L-cysteine and L-valine: step 2/3. Its function is as follows. Removes, in the presence of oxygen, 4 hydrogen atoms from delta-L-(alpha-aminoadipyl)-L-cysteinyl-D-valine (ACV) to form the azetidinone and thiazolidine rings of isopenicillin. This is Isopenicillin N synthase (pcbC) from Streptomyces microflavus (Streptomyces lipmanii).